The chain runs to 1017 residues: Putative calcium-transporting ATPase 13, plasma membrane-type (1017 aa).

Met1 carries the N-acetylmethionine modification. Topologically, residues 1–147 (MRRNVSDHAE…NTYTRQPSKG (147 aa)) are cytoplasmic. The interval 20-31 (LLELPKTLSKSN) is interaction with calmodulin. Residues 148–168 (LFHFVVEAFKDLTILILLGCA) form a helical membrane-spanning segment. The Lumenal segment spans residues 169–186 (TLSLGFGIKEHGLKEGWY). A helical membrane pass occupies residues 187–207 (DGGSIFVAVFLVVAVSAVSNF). Residues 208 to 336 (RQNRQFDKLS…NEQTPLQSRL (129 aa)) lie on the Cytoplasmic side of the membrane. A helical transmembrane segment spans residues 337–356 (DKLTSSIGKVGLLVAFLVLL). Residues 357–393 (VLLIRYFTGTTKDESGNREYNGKTTKSDEIVNAVVKM) are Lumenal-facing. The chain crosses the membrane as a helical span at residues 394-411 (VAAAVTIIVVAIPEGLPL). At 412 to 802 (AVTLTLAYSM…KWGRCVYNNI (391 aa)) the chain is on the cytoplasmic side. The active-site 4-aspartylphosphate intermediate is the Asp449. Mg(2+) is bound by residues Asp747 and Asp751. Residues 803–821 (QKFIQFQLTVNVAALVINF) traverse the membrane as a helical segment. Over 822-832 (VAAVSAGDVPL) the chain is Lumenal. Residues 833-853 (TAVQLLWVNLIMDTLGALALA) form a helical membrane-spanning segment. Residues 854 to 873 (TEKPTNDLMKKKPIGRVAPL) are Cytoplasmic-facing. A helical membrane pass occupies residues 874–896 (ITNIMWRNLLAQAFYQISVLLVL). The Lumenal segment spans residues 897–905 (QFRGRSIFN). A helical membrane pass occupies residues 906 to 926 (VTEKVKNTLIFNTFVLCQVFN). The Cytoplasmic portion of the chain corresponds to 927–944 (EFNARSLEKKNVFKGLHK). Residues 945-966 (NRLFIGIIVVTVVLQVVMVEFL) traverse the membrane as a helical segment. Over 967–976 (KRFADTERLN) the chain is Lumenal. The helical transmembrane segment at 977-998 (LGQWGVCIAIAAASWPIGWLVK) threads the bilayer. Over 999-1002 (SVPV) the chain is Cytoplasmic.

The protein belongs to the cation transport ATPase (P-type) (TC 3.A.3) family. Type IIB subfamily.

The protein localises to the membrane. The enzyme catalyses Ca(2+)(in) + ATP + H2O = Ca(2+)(out) + ADP + phosphate + H(+). Activated by calmodulin. Its function is as follows. This magnesium-dependent enzyme catalyzes the hydrolysis of ATP coupled with the translocation of calcium from the cytosol out of the cell or into organelles. The chain is Putative calcium-transporting ATPase 13, plasma membrane-type (ACA13) from Arabidopsis thaliana (Mouse-ear cress).